The primary structure comprises 150 residues: SsrA-binding protein (150 aa).

Belongs to the SmpB family.

It is found in the cytoplasm. In terms of biological role, required for rescue of stalled ribosomes mediated by trans-translation. Binds to transfer-messenger RNA (tmRNA), required for stable association of tmRNA with ribosomes. tmRNA and SmpB together mimic tRNA shape, replacing the anticodon stem-loop with SmpB. tmRNA is encoded by the ssrA gene; the 2 termini fold to resemble tRNA(Ala) and it encodes a 'tag peptide', a short internal open reading frame. During trans-translation Ala-aminoacylated tmRNA acts like a tRNA, entering the A-site of stalled ribosomes, displacing the stalled mRNA. The ribosome then switches to translate the ORF on the tmRNA; the nascent peptide is terminated with the 'tag peptide' encoded by the tmRNA and targeted for degradation. The ribosome is freed to recommence translation, which seems to be the essential function of trans-translation. The sequence is that of SsrA-binding protein from Campylobacter jejuni (strain RM1221).